The following is a 279-amino-acid chain: HTH-type transcriptional regulator HdfR (279 aa).

Positions 1 to 58 constitute an HTH lysR-type domain; that stretch reads MDTELLKTFLEVSRTRHFGRAAESLYLTQSAVSFRIRQLENQLGVNLFTRHRNNIRLT. A DNA-binding region (H-T-H motif) is located at residues 18–37; it reads FGRAAESLYLTQSAVSFRIR.

Belongs to the LysR transcriptional regulatory family.

Functionally, negatively regulates the transcription of the flagellar master operon flhDC by binding to the upstream region of the operon. The polypeptide is HTH-type transcriptional regulator HdfR (Escherichia coli O17:K52:H18 (strain UMN026 / ExPEC)).